Consider the following 228-residue polypeptide: Phosphoribosylformylglycinamidine synthase subunit PurQ (228 aa).

A Glutamine amidotransferase type-1 domain is found at 3 to 226; sequence FAVIVFPGSN…IANWRDSYAI (224 aa). Cysteine 87 functions as the Nucleophile in the catalytic mechanism. Active-site residues include histidine 195 and glutamate 197.

As to quaternary structure, part of the FGAM synthase complex composed of 1 PurL, 1 PurQ and 2 PurS subunits.

It localises to the cytoplasm. It catalyses the reaction N(2)-formyl-N(1)-(5-phospho-beta-D-ribosyl)glycinamide + L-glutamine + ATP + H2O = 2-formamido-N(1)-(5-O-phospho-beta-D-ribosyl)acetamidine + L-glutamate + ADP + phosphate + H(+). The enzyme catalyses L-glutamine + H2O = L-glutamate + NH4(+). The protein operates within purine metabolism; IMP biosynthesis via de novo pathway; 5-amino-1-(5-phospho-D-ribosyl)imidazole from N(2)-formyl-N(1)-(5-phospho-D-ribosyl)glycinamide: step 1/2. In terms of biological role, part of the phosphoribosylformylglycinamidine synthase complex involved in the purines biosynthetic pathway. Catalyzes the ATP-dependent conversion of formylglycinamide ribonucleotide (FGAR) and glutamine to yield formylglycinamidine ribonucleotide (FGAM) and glutamate. The FGAM synthase complex is composed of three subunits. PurQ produces an ammonia molecule by converting glutamine to glutamate. PurL transfers the ammonia molecule to FGAR to form FGAM in an ATP-dependent manner. PurS interacts with PurQ and PurL and is thought to assist in the transfer of the ammonia molecule from PurQ to PurL. The sequence is that of Phosphoribosylformylglycinamidine synthase subunit PurQ from Oceanobacillus iheyensis (strain DSM 14371 / CIP 107618 / JCM 11309 / KCTC 3954 / HTE831).